Consider the following 589-residue polypeptide: Serine/threonine-protein kinase PknJ (589 aa).

At Met1 to Arg342 the chain is on the cytoplasmic side. One can recognise a Protein kinase domain in the interval Tyr14 to Ala276. ATP contacts are provided by residues Leu20–Val28 and Lys43. The active-site Proton acceptor is the Asp136. Residues Gly343 to Met363 form a helical membrane-spanning segment. The Extracellular portion of the chain corresponds to Thr364–Gly589. A compositionally biased stretch (low complexity) spans Ser365–Thr387. The tract at residues Ser365–Pro400 is disordered.

This sequence belongs to the protein kinase superfamily. Ser/Thr protein kinase family. As to quaternary structure, homodimer.

It is found in the cell membrane. The catalysed reaction is L-seryl-[protein] + ATP = O-phospho-L-seryl-[protein] + ADP + H(+). The enzyme catalyses L-threonyl-[protein] + ATP = O-phospho-L-threonyl-[protein] + ADP + H(+). In Mycobacterium bovis (strain ATCC BAA-935 / AF2122/97), this protein is Serine/threonine-protein kinase PknJ (pknJ).